We begin with the raw amino-acid sequence, 166 residues long: Large ribosomal subunit protein uL10 (166 aa).

This sequence belongs to the universal ribosomal protein uL10 family. As to quaternary structure, part of the ribosomal stalk of the 50S ribosomal subunit. The N-terminus interacts with L11 and the large rRNA to form the base of the stalk. The C-terminus forms an elongated spine to which L12 dimers bind in a sequential fashion forming a multimeric L10(L12)X complex.

Functionally, forms part of the ribosomal stalk, playing a central role in the interaction of the ribosome with GTP-bound translation factors. The protein is Large ribosomal subunit protein uL10 of Lactobacillus johnsonii (strain CNCM I-12250 / La1 / NCC 533).